A 553-amino-acid chain; its full sequence is Major facilitator-type transporter hxnZ (553 aa).

The next 5 membrane-spanning stretches (helical) occupy residues 89-109 (FTVA…ISAV), 128-148 (VAYY…SDLI), 152-172 (PAFN…AGTS), 174-194 (FIAF…NVVC), and 213-233 (ALSG…WVFL). N-linked (GlcNAc...) asparagine glycosylation occurs at N235. 7 helical membrane-spanning segments follow: residues 257-277 (YTLI…IFVF), 366-386 (ALIW…FNFL), 409-429 (IQSA…NTFL), 433-453 (WMMG…VGVK), 459-481 (LAFS…YAIM), 496-516 (TASG…SLIA), and 525-545 (PIYA…GLPF).

Belongs to the major facilitator superfamily.

The protein localises to the cell membrane. Major facilitator-type transporter, part of the hnx cluster involved in the purine degradation. The nicotinate hydroxylase hnxS accepts nicotinate as a substrate and catalyzes the first step of nicotinate catabolism. The major facilitator-type transporters hxnP and hxnZ are probably involved in the uptake of nicotinate-derived metabolites, and the oxidoreductases hxnT and hxnY in the further metabolism of 6-OH nicotinic acid. The chain is Major facilitator-type transporter hxnZ from Emericella nidulans (strain FGSC A4 / ATCC 38163 / CBS 112.46 / NRRL 194 / M139) (Aspergillus nidulans).